The sequence spans 284 residues: RCS-specific HTH-type transcriptional activator RclR (284 aa).

An intrachain disulfide couples Cys-21 to Cys-89. The 102-residue stretch at 177 to 278 (PRLGAVIQQM…GCTPGEYRER (102 aa)) folds into the HTH araC/xylS-type domain. 2 DNA-binding regions (H-T-H motif) span residues 197–218 (ESLA…RDVS) and 245–268 (VVVI…VREF).

With respect to regulation, oxydation of Cys-21 leads to partial activation of RclR, followed by the formation of an intramolecular disulfide bond between Cys-21 and Cys-89, which stabilizes the active form of RclR. In terms of biological role, involved in reactive chlorine species (RCS) stress resistance. Up-regulates, in response to hypochlorous acid (HOCl), the expression of three genes essential for survival of RCS stress (rclA, rclB and rclC) and its own expression. This chain is RCS-specific HTH-type transcriptional activator RclR (rclR), found in Escherichia coli (strain K12).